The sequence spans 202 residues: Outer-membrane lipoprotein carrier protein (202 aa).

The N-terminal stretch at 1–18 (MNRLFLILLLIFSHEVFS) is a signal peptide.

Belongs to the LolA family. In terms of assembly, monomer.

It localises to the periplasm. Its function is as follows. Participates in the translocation of lipoproteins from the inner membrane to the outer membrane. Only forms a complex with a lipoprotein if the residue after the N-terminal Cys is not an aspartate (The Asp acts as a targeting signal to indicate that the lipoprotein should stay in the inner membrane). The chain is Outer-membrane lipoprotein carrier protein from Legionella pneumophila (strain Lens).